The primary structure comprises 562 residues: MTIPHMKYAVSKTSENKVSNTVSPTQDKDAIRKQPDDIINNDEPSHKKIKVAQPDSLRETNTTDPLGHTKAALGEVASMELKPTNDMDPLAVSAASVVSMSNDVLKPETPKGPIIISKNPSNGIFYGPSFTKRESLNARMFLKYYGAHKFLDTYLPEDLNSLYIYYLIKLLGFEVKDQALIGTINSIVHINSQERVQDLGSAISVTNVEDPLAKKQTVRLIKDLQRAINKVLCTRLRLSNFFTIDHFIQKLHTARKILVLTGAGVSTSLGIPDFRSSEGFYSKIKHLGLDDPQDVFNYNIFMHDPSVFYNIANMVLPPEKIYSPLHSFIKMLQMKGKLLRNYTQNIDNLESYAGISTDKLVQCHGSFATATCVTCHWNLPGERIFNKIRNLELPLCPYCYKKRREYFPEGYNNKVGVAASQGSMSERPPYILNSYGVLKPDITFFGEALPNKFHKSIREDILECDLLICIGTSLKVAPVSEIVNMVPSHVPQVLINRDPVKHAEFDLSLLGYCDDIAAMVAQKCGWTIPHKKWNDLKNKNFKCQEKDKGVYVVTSDEHPKTL.

The tract at residues 1-67 (MTIPHMKYAV…RETNTTDPLG (67 aa)) is disordered. The span at 11-25 (SKTSENKVSNTVSPT) shows a compositional bias: polar residues. The span at 26 to 36 (QDKDAIRKQPD) shows a compositional bias: basic and acidic residues. In terms of domain architecture, Deacetylase sirtuin-type spans 237–527 (RLSNFFTIDH…AMVAQKCGWT (291 aa)). Residues 262–281 (GAGV…EGFY) and 344–347 (QNID) each bind NAD(+). Catalysis depends on His364, which acts as the Proton acceptor. The Zn(2+) site is built by Cys372, Cys375, Cys396, and Cys399. Residues 471–473 (GTS), 496–498 (NRD), and Cys513 contribute to the NAD(+) site.

This sequence belongs to the sirtuin family. Class I subfamily. As to quaternary structure, homomultimer. Forms a complex with SIR3 and SIR4. Component of the RENT complex, at least composed of SIR2, CDC14 and NET1. The RENT complex interacts with FOB1. Interacts with ESC8. Interacts with and ZDS2. Interacts with MCM10. Interacts with SLX5. Interacts with NSI1. It depends on Zn(2+) as a cofactor.

The protein localises to the nucleus. It localises to the nucleolus. The enzyme catalyses N(6)-acetyl-L-lysyl-[protein] + NAD(+) + H2O = 2''-O-acetyl-ADP-D-ribose + nicotinamide + L-lysyl-[protein]. With respect to regulation, its activity is increased by calorie restriction, which slows the pace of aging and increases maximum lifespan. Activated by resveratrol (3,5,4'-trihydroxy-trans-stilbene), which is found in red wine. Functionally, NAD-dependent deacetylase, which participates in a wide range of cellular events including chromosome silencing, chromosome segregation, DNA recombination and the determination of life span. Involved in transcriptional repression of the silent mating-type loci HML and HMR and telomeric silencing via its association with SIR3 and SIR4. Plays a central role in ribosomal DNA (rDNA) silencing via its association with the RENT complex, preventing hyperrecombination, and repressing transcription from foreign promoters, which contributes to extending life span. Probably represses transcription via the formation of heterochromatin structure, which involves the compaction of chromatin fiber into a more condensed form, although this complex in at least one case can still bind euchromatic levels of positive transcription regulators. Although it displays some NAD-dependent histone deacetylase activity on histone H3K9Ac and H3K14Ac and histone H4K16Ac in vitro, such activity is unclear in vivo and may not be essential. This Saccharomyces cerevisiae (strain ATCC 204508 / S288c) (Baker's yeast) protein is NAD-dependent histone deacetylase SIR2 (SIR2).